Consider the following 201-residue polypeptide: Adenylyl-sulfate kinase (201 aa).

35–42 (GLSGSGKS) serves as a coordination point for ATP. Ser-109 (phosphoserine intermediate) is an active-site residue.

It belongs to the APS kinase family.

It carries out the reaction adenosine 5'-phosphosulfate + ATP = 3'-phosphoadenylyl sulfate + ADP + H(+). Its pathway is sulfur metabolism; hydrogen sulfide biosynthesis; sulfite from sulfate: step 2/3. Catalyzes the synthesis of activated sulfate. This is Adenylyl-sulfate kinase from Salmonella gallinarum (strain 287/91 / NCTC 13346).